A 334-amino-acid chain; its full sequence is Holliday junction branch migration complex subunit RuvB (334 aa).

Residues 1-182 (MNERMVDQSM…FGVHLRLEYY (182 aa)) are large ATPase domain (RuvB-L). ATP contacts are provided by residues Leu21, Arg22, Gly63, Lys66, Thr67, Thr68, 129-131 (EDF), Arg172, Tyr182, and Arg219. A Mg(2+)-binding site is contributed by Thr67. The small ATPAse domain (RuvB-S) stretch occupies residues 183–253 (NESDLKEIII…TTKHALGLLQ (71 aa)). Positions 256–334 (QHGLDYIDHK…HFAKSNEERE (79 aa)) are head domain (RuvB-H). 3 residues coordinate DNA: Arg292, Arg311, and Arg316.

The protein belongs to the RuvB family. As to quaternary structure, homohexamer. Forms an RuvA(8)-RuvB(12)-Holliday junction (HJ) complex. HJ DNA is sandwiched between 2 RuvA tetramers; dsDNA enters through RuvA and exits via RuvB. An RuvB hexamer assembles on each DNA strand where it exits the tetramer. Each RuvB hexamer is contacted by two RuvA subunits (via domain III) on 2 adjacent RuvB subunits; this complex drives branch migration. In the full resolvosome a probable DNA-RuvA(4)-RuvB(12)-RuvC(2) complex forms which resolves the HJ.

The protein localises to the cytoplasm. It catalyses the reaction ATP + H2O = ADP + phosphate + H(+). The RuvA-RuvB-RuvC complex processes Holliday junction (HJ) DNA during genetic recombination and DNA repair, while the RuvA-RuvB complex plays an important role in the rescue of blocked DNA replication forks via replication fork reversal (RFR). RuvA specifically binds to HJ cruciform DNA, conferring on it an open structure. The RuvB hexamer acts as an ATP-dependent pump, pulling dsDNA into and through the RuvAB complex. RuvB forms 2 homohexamers on either side of HJ DNA bound by 1 or 2 RuvA tetramers; 4 subunits per hexamer contact DNA at a time. Coordinated motions by a converter formed by DNA-disengaged RuvB subunits stimulates ATP hydrolysis and nucleotide exchange. Immobilization of the converter enables RuvB to convert the ATP-contained energy into a lever motion, pulling 2 nucleotides of DNA out of the RuvA tetramer per ATP hydrolyzed, thus driving DNA branch migration. The RuvB motors rotate together with the DNA substrate, which together with the progressing nucleotide cycle form the mechanistic basis for DNA recombination by continuous HJ branch migration. Branch migration allows RuvC to scan DNA until it finds its consensus sequence, where it cleaves and resolves cruciform DNA. The chain is Holliday junction branch migration complex subunit RuvB from Staphylococcus aureus (strain bovine RF122 / ET3-1).